A 246-amino-acid polypeptide reads, in one-letter code: 2,3-bisphosphoglycerate-dependent phosphoglycerate mutase (246 aa).

Residues 9–16 (RHGQSAWN), 22–23 (TG), Arg-61, 88–91 (ERHY), Lys-99, 115–116 (RR), and 181–182 (GN) contribute to the substrate site. His-10 (tele-phosphohistidine intermediate) is an active-site residue. Catalysis depends on Glu-88, which acts as the Proton donor/acceptor.

The protein belongs to the phosphoglycerate mutase family. BPG-dependent PGAM subfamily.

It catalyses the reaction (2R)-2-phosphoglycerate = (2R)-3-phosphoglycerate. It functions in the pathway carbohydrate degradation; glycolysis; pyruvate from D-glyceraldehyde 3-phosphate: step 3/5. Catalyzes the interconversion of 2-phosphoglycerate and 3-phosphoglycerate. The sequence is that of 2,3-bisphosphoglycerate-dependent phosphoglycerate mutase from Bifidobacterium longum (strain DJO10A).